Reading from the N-terminus, the 185-residue chain is MPQHQNYSLSEEDVIQLVFRKYGVKITSEQIVRAYAPEQKMSWKKSVEVARFIKGMTLRQAKSWLEDVVKMKRPIPIKTFKKKQAHHAVPWSGWPVAKWPVKVAKRFLDLLENLENNAKFRGLDVERVVIVHAAAHKGYRIPNIMPRAFGRATRFDEQTVNVEVIAAELPKEVVPKRYKLNLVKR.

It belongs to the universal ribosomal protein uL22 family. Part of the 50S ribosomal subunit.

In terms of biological role, this protein binds specifically to 23S rRNA. It makes multiple contacts with different domains of the 23S rRNA in the assembled 50S subunit and ribosome. The globular domain of the protein is located near the polypeptide exit tunnel on the outside of the subunit, while an extended beta-hairpin is found that lines the wall of the exit tunnel in the center of the 70S ribosome. The sequence is that of Large ribosomal subunit protein uL22 from Pyrobaculum islandicum (strain DSM 4184 / JCM 9189 / GEO3).